The sequence spans 353 residues: Photosystem II protein D1 (353 aa).

N-acetylthreonine is present on Thr-2. Thr-2 carries the post-translational modification Phosphothreonine. Transmembrane regions (helical) follow at residues 29-46 (YIGW…TATS), 118-133 (HFLL…EWEL), and 142-156 (WIAI…AATA). His-118 serves as a coordination point for chlorophyll a. Tyr-126 is a binding site for pheophytin a. The [CaMn4O5] cluster site is built by Asp-170 and Glu-189. The helical transmembrane segment at 197–218 (FHMLGVAGVFGGSLFSAMHGSL) threads the bilayer. Position 198 (His-198) interacts with chlorophyll a. A quinone-binding positions include His-215 and 264–265 (SF). His-215 provides a ligand contact to Fe cation. His-272 contributes to the Fe cation binding site. A helical transmembrane segment spans residues 274 to 288 (FLAAWPVIGIWFTAL). The [CaMn4O5] cluster site is built by His-332, Glu-333, Asp-342, and Ala-344. Residues 345 to 353 (TFEVSATNA) constitute a propeptide that is removed on maturation.

This sequence belongs to the reaction center PufL/M/PsbA/D family. PSII is composed of 1 copy each of membrane proteins PsbA, PsbB, PsbC, PsbD, PsbE, PsbF, PsbH, PsbI, PsbJ, PsbK, PsbL, PsbM, PsbT, PsbX, PsbY, PsbZ, Psb30/Ycf12, at least 3 peripheral proteins of the oxygen-evolving complex and a large number of cofactors. It forms dimeric complexes. The cofactor is The D1/D2 heterodimer binds P680, chlorophylls that are the primary electron donor of PSII, and subsequent electron acceptors. It shares a non-heme iron and each subunit binds pheophytin, quinone, additional chlorophylls, carotenoids and lipids. D1 provides most of the ligands for the Mn4-Ca-O5 cluster of the oxygen-evolving complex (OEC). There is also a Cl(-1) ion associated with D1 and D2, which is required for oxygen evolution. The PSII complex binds additional chlorophylls, carotenoids and specific lipids.. Tyr-161 forms a radical intermediate that is referred to as redox-active TyrZ, YZ or Y-Z. Post-translationally, C-terminally processed by CTPA; processing is essential to allow assembly of the oxygen-evolving complex and thus photosynthetic growth.

Its subcellular location is the plastid membrane. It carries out the reaction 2 a plastoquinone + 4 hnu + 2 H2O = 2 a plastoquinol + O2. Photosystem II (PSII) is a light-driven water:plastoquinone oxidoreductase that uses light energy to abstract electrons from H(2)O, generating O(2) and a proton gradient subsequently used for ATP formation. It consists of a core antenna complex that captures photons, and an electron transfer chain that converts photonic excitation into a charge separation. The D1/D2 (PsbA/PsbD) reaction center heterodimer binds P680, the primary electron donor of PSII as well as several subsequent electron acceptors. This Cuscuta gronovii (Common dodder) protein is Photosystem II protein D1.